The chain runs to 242 residues: ATP-dependent dethiobiotin synthetase BioD (242 aa).

An ATP-binding site is contributed by 12 to 17; sequence EVGKTV. T16 serves as a coordination point for Mg(2+). The active site involves K37. S41 serves as a coordination point for substrate. Residues D51 and 112–115 contribute to the ATP site; that span reads EGAG. Residues D51 and E112 each contribute to the Mg(2+) site.

This sequence belongs to the dethiobiotin synthetase family. Homodimer. Requires Mg(2+) as cofactor.

It localises to the cytoplasm. It carries out the reaction (7R,8S)-7,8-diammoniononanoate + CO2 + ATP = (4R,5S)-dethiobiotin + ADP + phosphate + 3 H(+). The protein operates within cofactor biosynthesis; biotin biosynthesis; biotin from 7,8-diaminononanoate: step 1/2. Functionally, catalyzes a mechanistically unusual reaction, the ATP-dependent insertion of CO2 between the N7 and N8 nitrogen atoms of 7,8-diaminopelargonic acid (DAPA, also called 7,8-diammoniononanoate) to form a ureido ring. This Bacillus cereus (strain ATCC 14579 / DSM 31 / CCUG 7414 / JCM 2152 / NBRC 15305 / NCIMB 9373 / NCTC 2599 / NRRL B-3711) protein is ATP-dependent dethiobiotin synthetase BioD.